The sequence spans 216 residues: Ras-related protein Rab-11A (216 aa).

The residue at position 2 (Gly2) is an N-acetylglycine. GTP-binding residues include Ser20, Gly21, Val22, Gly23, Lys24, Ser25, Asn26, Asn37, Leu38, Ser40, Ser42, and Thr43. Position 25 (Ser25) interacts with Mg(2+). The short motif at Phe36–Glu47 is the Switch 1 element. Mg(2+)-binding residues include Thr43 and Asp66. A Switch 2 motif is present at residues Thr67–Gly86. GTP contacts are provided by Gly69, Asn124, Lys125, Asp127, Ala155, and Leu156. Residues Asp183 to Gln211 form a disordered region. 2 S-geranylgeranyl cysteine lipidation sites follow: Cys212 and Cys213. Cysteine methyl ester is present on Cys213. Residues Gln214–Ile216 constitute a propeptide, removed in mature form.

It belongs to the small GTPase superfamily. Rab family. In terms of assembly, interacts (GTP-bound form) with RAB11FIPs (via their C-termini) including RAB11FIP1, RAB11FIP2, RAB11FIP3, RAB11FIP4 and RAB11FIP5 effectors. Forms a complex with RAB11FIP3 and dynein intermediate chain DYNC1LI1; the interaction between RAB11A1 and RAB11FIP3 is direct; the complex regulates endocytic trafficking. Interacts with EVI5; EVI5 and RAB11FIP3 may be mutually exclusive and compete for binding RAB11A. Interacts with SGSM1, SGSM2, SGSM3 and VIPAS39. Interacts with EXOC6 in a GTP-dependent manner. Interacts with RAB11FIP5. Interacts with STXBP6. Interacts (GDP-bound form) with ZFYVE27. Interacts with BIRC6/bruce. May interact with TBC1D14. Interacts with UNC119; in a cell cycle-dependent manner. GDP-bound and nucleotide-free forms interact with SH3BP5. Interacts (GDP-bound form) with KIF5A in a ZFYVE27-dependent manner. Interacts (GDP-bound form) with RELCH. Found in a complex composed of RELCH, OSBP1 and RAB11A. Interacts with TBC1D12. Interacts with DEF6. Interacts with ATP9A. Forms a heterotetramer with RAB11FIP3; the GTP-bound form is preferred for binding. Forms a complex with Rabin8/RAB3IP and RAB11FIP3, probably a heterohexamer with two of each protein subunit, where Rabin8/RAB3IP and RAB11FIP3 simultaneously bind to RAB11A; the complex promotes preciliary trafficking and cilia growth. Forms a complex containing RAB11A, ASAP1, Rabin8/RAB3IP, RAP11FIP3 and ARF4; the complex promotes preciliary trafficking; the complex binds to RHO in photoreceptor cells and promotes RHO ciliary transport. Interacts (GTP-bound form) with WDR44; the interaction prevents RAB11A-RAB3IP-RAB11FIP3 complex formation. Requires Mg(2+) as cofactor. In terms of tissue distribution, detected in various tissues, such as brain, testis, spleen, and heart.

The protein resides in the cell membrane. It is found in the endosome membrane. It localises to the recycling endosome membrane. Its subcellular location is the cleavage furrow. The protein localises to the cytoplasmic vesicle. The protein resides in the phagosome. It is found in the cytoplasmic vesicle membrane. It localises to the golgi apparatus. Its subcellular location is the trans-Golgi network. It catalyses the reaction GTP + H2O = GDP + phosphate + H(+). Its activity is regulated as follows. Regulated by guanine nucleotide exchange factors (GEFs) which promote the exchange of bound GDP for free GTP. Regulated by GTPase activating proteins (GAPs) which increase the GTP hydrolysis activity. Inhibited by GDP dissociation inhibitors (GDIs) which prevent Rab-GDP dissociation. Functionally, the small GTPases Rab are key regulators of intracellular membrane trafficking, from the formation of transport vesicles to their fusion with membranes. Rabs cycle between an inactive GDP-bound form and an active GTP-bound form that is able to recruit to membranes different set of downstream effectors directly responsible for vesicle formation, movement, tethering and fusion. The small Rab GTPase RAB11A regulates endocytic recycling. Forms a functional Rab11/RAB11FIP3/dynein complex that regulates the movement of peripheral sorting endosomes (SE) along microtubule tracks toward the microtubule organizing center/centrosome, generating the endosomal recycling compartment (ERC). Acts as a major regulator of membrane delivery during cytokinesis. Together with MYO5B and RAB8A participates in epithelial cell polarization. Together with Rabin8/RAB3IP, RAB8A, the exocyst complex, PARD3, PRKCI, ANXA2, CDC42 and DNMBP promotes transcytosis of PODXL to the apical membrane initiation sites (AMIS), apical surface formation and lumenogenesis. Together with MYO5B participates in CFTR trafficking to the plasma membrane and TF (Transferrin) recycling in nonpolarized cells. Required in a complex with MYO5B and RAB11FIP2 for the transport of NPC1L1 to the plasma membrane. Participates in the sorting and basolateral transport of CDH1 from the Golgi apparatus to the plasma membrane. Regulates the recycling of FCGRT (receptor of Fc region of monomeric IgG) to basolateral membranes. May also play a role in melanosome transport and release from melanocytes. Promotes Rabin8/RAB3IP preciliary vesicular trafficking to mother centriole by forming a ciliary targeting complex containing Rab11, ASAP1, Rabin8/RAB3IP, RAB11FIP3 and ARF4, thereby regulating ciliogenesis initiation. On the contrary, upon LPAR1 receptor signaling pathway activation, interaction with phosphorylated WDR44 prevents Rab11-RAB3IP-RAB11FIP3 complex formation and cilia growth. Participates in the export of a subset of neosynthesized proteins through a Rab8-Rab10-Rab11-endososomal dependent export route via interaction with WDR44. The protein is Ras-related protein Rab-11A of Rattus norvegicus (Rat).